A 609-amino-acid polypeptide reads, in one-letter code: UvrABC system protein C (609 aa).

Residues 19–97 (ASPGCYLWKS…IKKHNPRFNV (79 aa)) enclose the GIY-YIG domain. Residues 208-243 (ESLVSDLNIKMSNASERLDFEKAARYRDMLQRIQNF) enclose the UVR domain.

It belongs to the UvrC family. Interacts with UvrB in an incision complex.

It localises to the cytoplasm. Its function is as follows. The UvrABC repair system catalyzes the recognition and processing of DNA lesions. UvrC both incises the 5' and 3' sides of the lesion. The N-terminal half is responsible for the 3' incision and the C-terminal half is responsible for the 5' incision. The protein is UvrABC system protein C of Leptospira interrogans serogroup Icterohaemorrhagiae serovar copenhageni (strain Fiocruz L1-130).